The following is a 132-amino-acid chain: Interleukin-5 (132 aa).

The signal sequence occupies residues 1–19 (MRMLLHLSILTLACVWTFA). N-linked (GlcNAc...) asparagine glycosylation is found at asparagine 45, asparagine 74, and asparagine 88.

The protein belongs to the IL-5 family. In terms of assembly, homodimer; disulfide-linked. Interacts with IL5RA. Interacts with CSF2RB.

It is found in the secreted. Functionally, homodimeric cytokine expressed predominantly by T-lymphocytes and NK cells that plays an important role in the survival, differentiation, and chemotaxis of eosinophils. Also acts on activated and resting B-cells to induce immunoglobulin production, growth, and differentiation. Mechanistically, exerts its biological effects through a receptor composed of IL5RA subunit and the cytokine receptor common subunit beta/CSF2RB. Binding to the receptor leads to activation of various kinases including LYN, SYK and JAK2 and thereby propagates signals through the RAS-MAPK and JAK-STAT5 pathways respectively. The chain is Interleukin-5 (IL5) from Sigmodon hispidus (Hispid cotton rat).